Consider the following 238-residue polypeptide: Ribonuclease PH (238 aa).

Residues Arg-86 and 124-126 (GTR) contribute to the phosphate site.

Belongs to the RNase PH family. In terms of assembly, homohexameric ring arranged as a trimer of dimers.

It catalyses the reaction tRNA(n+1) + phosphate = tRNA(n) + a ribonucleoside 5'-diphosphate. Phosphorolytic 3'-5' exoribonuclease that plays an important role in tRNA 3'-end maturation. Removes nucleotide residues following the 3'-CCA terminus of tRNAs; can also add nucleotides to the ends of RNA molecules by using nucleoside diphosphates as substrates, but this may not be physiologically important. Probably plays a role in initiation of 16S rRNA degradation (leading to ribosome degradation) during starvation. This chain is Ribonuclease PH, found in Pasteurella multocida (strain Pm70).